Reading from the N-terminus, the 206-residue chain is dTTP/UTP pyrophosphatase (206 aa).

The active-site Proton acceptor is Asp-87.

The protein belongs to the Maf family. YhdE subfamily. It depends on a divalent metal cation as a cofactor.

The protein localises to the cytoplasm. The enzyme catalyses dTTP + H2O = dTMP + diphosphate + H(+). It catalyses the reaction UTP + H2O = UMP + diphosphate + H(+). Nucleoside triphosphate pyrophosphatase that hydrolyzes dTTP and UTP. May have a dual role in cell division arrest and in preventing the incorporation of modified nucleotides into cellular nucleic acids. This chain is dTTP/UTP pyrophosphatase, found in Aromatoleum aromaticum (strain DSM 19018 / LMG 30748 / EbN1) (Azoarcus sp. (strain EbN1)).